Here is a 204-residue protein sequence, read N- to C-terminus: Elongation factor Ts (204 aa).

The involved in Mg(2+) ion dislocation from EF-Tu stretch occupies residues 87–90 (TDFV).

Belongs to the EF-Ts family.

It is found in the cytoplasm. Associates with the EF-Tu.GDP complex and induces the exchange of GDP to GTP. It remains bound to the aminoacyl-tRNA.EF-Tu.GTP complex up to the GTP hydrolysis stage on the ribosome. This Frankia casuarinae (strain DSM 45818 / CECT 9043 / HFP020203 / CcI3) protein is Elongation factor Ts.